Consider the following 171-residue polypeptide: Co-chaperone protein HscB (171 aa).

A J domain is found at 2-74 (DYFTLFGLPA…LTRAEYLLSL (73 aa)).

This sequence belongs to the HscB family. Interacts with HscA and stimulates its ATPase activity. Interacts with IscU.

In terms of biological role, co-chaperone involved in the maturation of iron-sulfur cluster-containing proteins. Seems to help targeting proteins to be folded toward HscA. This Salmonella paratyphi A (strain AKU_12601) protein is Co-chaperone protein HscB.